The primary structure comprises 261 residues: tRNA pseudouridine synthase A (261 aa).

Catalysis depends on D51, which acts as the Nucleophile. Residue Y109 participates in substrate binding.

Belongs to the tRNA pseudouridine synthase TruA family. As to quaternary structure, homodimer.

It carries out the reaction uridine(38/39/40) in tRNA = pseudouridine(38/39/40) in tRNA. Its function is as follows. Formation of pseudouridine at positions 38, 39 and 40 in the anticodon stem and loop of transfer RNAs. In Shewanella amazonensis (strain ATCC BAA-1098 / SB2B), this protein is tRNA pseudouridine synthase A.